Consider the following 325-residue polypeptide: Quinolinate synthase (325 aa).

Iminosuccinate contacts are provided by His-41 and Ser-58. Cys-103 is a [4Fe-4S] cluster binding site. Residues 129-131 (YIN) and Ser-146 each bind iminosuccinate. A [4Fe-4S] cluster-binding site is contributed by Cys-189. Residues 215 to 217 (HPE) and Thr-232 contribute to the iminosuccinate site. Position 282 (Cys-282) interacts with [4Fe-4S] cluster.

This sequence belongs to the quinolinate synthase family. Type 2 subfamily. [4Fe-4S] cluster serves as cofactor.

The protein localises to the cytoplasm. The catalysed reaction is iminosuccinate + dihydroxyacetone phosphate = quinolinate + phosphate + 2 H2O + H(+). It participates in cofactor biosynthesis; NAD(+) biosynthesis; quinolinate from iminoaspartate: step 1/1. Catalyzes the condensation of iminoaspartate with dihydroxyacetone phosphate to form quinolinate. In Rippkaea orientalis (strain PCC 8801 / RF-1) (Cyanothece sp. (strain PCC 8801)), this protein is Quinolinate synthase.